A 489-amino-acid polypeptide reads, in one-letter code: Aklavinone 12-hydroxylase DnrF (489 aa).

FAD-binding positions include 17–18 (LG), glutamate 37, glutamine 121, and leucine 145. The Proton acceptor role is filled by tyrosine 224. Aspartate 308 lines the FAD pocket. Glycine 317 provides a ligand contact to aklavinone. Disordered regions lie at residues 402–428 (VAAE…RAPH) and 455–489 (EGGA…PPAN). Residues 468–482 (RIWASASTSISSAAM) show a composition bias toward low complexity.

This sequence belongs to the PheA/TfdB FAD monooxygenase family. In terms of assembly, monomer. Requires FAD as cofactor.

It carries out the reaction aklavinone + NADPH + O2 + H(+) = epsilon-rhodomycinone + NADP(+) + H2O. It participates in antibiotic biosynthesis; daunorubicin biosynthesis. The protein operates within antibiotic biosynthesis; carminomycin biosynthesis. It functions in the pathway antibiotic biosynthesis; rhodomycin biosynthesis. Its function is as follows. Involved in the biosynthesis of the anthracyclines carminomycin, rhodomycin and daunorubicin (daunomycin) which are aromatic polyketide antibiotics that exhibit high cytotoxicity and are widely applied in the chemotherapy of a variety of cancers. Catalyzes the incorporation of a hydroxyl group at position C-11 of aklavinone, resulting in epsilon-rhodomycinone. It cannot accept substrates glycosylated at position C-7. It can also hydroxylate 11-deoxycarminomycinone and can use both NAD or NADP. The chain is Aklavinone 12-hydroxylase DnrF (dnrF) from Streptomyces peucetius.